The following is a 167-amino-acid chain: Dihydrofolate reductase (167 aa).

One can recognise a DHFR domain in the interval 1–162 (MFISMWAQDK…YPHRFQKWQK (162 aa)). NADP(+) contacts are provided by residues Ala7 and 13 to 19 (LIGKDGL). Substrate is bound at residue Asp27. Residue 45–46 (KT) participates in NADP(+) binding. Position 58 (Arg58) interacts with substrate. NADP(+) is bound by residues 64 to 65 (TT) and 99 to 106 (GGSRIFQA). Substrate is bound at residue Thr117.

This sequence belongs to the dihydrofolate reductase family.

It carries out the reaction (6S)-5,6,7,8-tetrahydrofolate + NADP(+) = 7,8-dihydrofolate + NADPH + H(+). It functions in the pathway cofactor biosynthesis; tetrahydrofolate biosynthesis; 5,6,7,8-tetrahydrofolate from 7,8-dihydrofolate: step 1/1. Functionally, key enzyme in folate metabolism. Catalyzes an essential reaction for de novo glycine and purine synthesis, and for DNA precursor synthesis. The chain is Dihydrofolate reductase (folA) from Enterococcus faecium (Streptococcus faecium).